Consider the following 499-residue polypeptide: Alpha-amylase A type-3 (499 aa).

The N-terminal stretch at Met1–Ala21 is a signal peptide. Cysteines 51 and 59 form a disulfide. Trp104 serves as a coordination point for substrate. Residue Asn142 coordinates Ca(2+). A substrate-binding site is contributed by His143. Cys171 and Cys185 are disulfide-bonded. Positions 183 and 196 each coordinate Ca(2+). An N-linked (GlcNAc...) asparagine glycan is attached at Asn218. A substrate-binding site is contributed by Arg225. Residues Asp227, His231, and Glu251 each coordinate Ca(2+). The active-site Nucleophile is the Asp227. Lys230–His231 is a binding site for substrate. Glu251 (proton donor) is an active-site residue. Gly255 is a binding site for substrate. Cys261 and Cys304 are oxidised to a cystine. A substrate-binding site is contributed by Arg365. Residues Cys461 and Cys496 are joined by a disulfide bond.

Belongs to the glycosyl hydrolase 13 family. Monomer. Ca(2+) serves as cofactor.

Its subcellular location is the secreted. It carries out the reaction Endohydrolysis of (1-&gt;4)-alpha-D-glucosidic linkages in polysaccharides containing three or more (1-&gt;4)-alpha-linked D-glucose units.. The polypeptide is Alpha-amylase A type-3 (amy3) (Aspergillus oryzae (strain ATCC 42149 / RIB 40) (Yellow koji mold)).